We begin with the raw amino-acid sequence, 141 residues long: Nucleoside diphosphate kinase (141 aa).

Lys-11, Phe-59, Arg-87, Thr-93, Arg-104, and Asn-114 together coordinate ATP. The active-site Pros-phosphohistidine intermediate is the His-117.

It belongs to the NDK family. Homotetramer. Mg(2+) is required as a cofactor.

The protein resides in the cytoplasm. It catalyses the reaction a 2'-deoxyribonucleoside 5'-diphosphate + ATP = a 2'-deoxyribonucleoside 5'-triphosphate + ADP. It carries out the reaction a ribonucleoside 5'-diphosphate + ATP = a ribonucleoside 5'-triphosphate + ADP. Major role in the synthesis of nucleoside triphosphates other than ATP. The ATP gamma phosphate is transferred to the NDP beta phosphate via a ping-pong mechanism, using a phosphorylated active-site intermediate. This is Nucleoside diphosphate kinase from Legionella pneumophila (strain Lens).